The primary structure comprises 305 residues: Ribonuclease BN (305 aa).

His64, His66, Asp68, His69, His141, Asp212, and His270 together coordinate Zn(2+). The active-site Proton acceptor is Asp68.

Belongs to the RNase Z family. RNase BN subfamily. As to quaternary structure, homodimer. It depends on Zn(2+) as a cofactor.

Its function is as follows. Zinc phosphodiesterase, which has both exoribonuclease and endoribonuclease activities. In Shigella boydii serotype 18 (strain CDC 3083-94 / BS512), this protein is Ribonuclease BN.